A 660-amino-acid chain; its full sequence is UvrABC system protein C (660 aa).

A GIY-YIG domain is found at 16-95 (ESPGVYRFRD…IKQYDPRFNV (80 aa)). A UVR domain is found at 208–243 (DAMVRRLEREMAEASAELEFERAARLRDDLAALRRA). The tract at residues 469–501 (GEAGVESAGDPDAPAGPDAPDEPRVGTLVDPTT) is disordered. Residues 476–486 (AGDPDAPAGPD) show a composition bias toward low complexity.

It belongs to the UvrC family. Interacts with UvrB in an incision complex.

It localises to the cytoplasm. Its function is as follows. The UvrABC repair system catalyzes the recognition and processing of DNA lesions. UvrC both incises the 5' and 3' sides of the lesion. The N-terminal half is responsible for the 3' incision and the C-terminal half is responsible for the 5' incision. The protein is UvrABC system protein C of Salinispora arenicola (strain CNS-205).